The following is a 118-amino-acid chain: Large ribosomal subunit protein bL20 (118 aa).

This sequence belongs to the bacterial ribosomal protein bL20 family.

Its function is as follows. Binds directly to 23S ribosomal RNA and is necessary for the in vitro assembly process of the 50S ribosomal subunit. It is not involved in the protein synthesizing functions of that subunit. The chain is Large ribosomal subunit protein bL20 from Staphylococcus aureus (strain Mu3 / ATCC 700698).